The following is a 511-amino-acid chain: Bifunctional purine biosynthesis protein PurH (511 aa).

The MGS-like domain occupies 1–146 (MGRLALISVT…KNFAHLTVIS (146 aa)).

The protein belongs to the PurH family.

The catalysed reaction is (6R)-10-formyltetrahydrofolate + 5-amino-1-(5-phospho-beta-D-ribosyl)imidazole-4-carboxamide = 5-formamido-1-(5-phospho-D-ribosyl)imidazole-4-carboxamide + (6S)-5,6,7,8-tetrahydrofolate. It catalyses the reaction IMP + H2O = 5-formamido-1-(5-phospho-D-ribosyl)imidazole-4-carboxamide. It participates in purine metabolism; IMP biosynthesis via de novo pathway; 5-formamido-1-(5-phospho-D-ribosyl)imidazole-4-carboxamide from 5-amino-1-(5-phospho-D-ribosyl)imidazole-4-carboxamide (10-formyl THF route): step 1/1. The protein operates within purine metabolism; IMP biosynthesis via de novo pathway; IMP from 5-formamido-1-(5-phospho-D-ribosyl)imidazole-4-carboxamide: step 1/1. The polypeptide is Bifunctional purine biosynthesis protein PurH (Microcystis aeruginosa (strain NIES-843 / IAM M-2473)).